Reading from the N-terminus, the 649-residue chain is Transcription factor E2-alpha (649 aa).

5 disordered regions span residues 34–107, 127–206, 222–267, 291–325, and 339–382; these read GKGR…SERS, LPGE…SAKT, LHPS…GLQQ, SAAP…SSSG, and DHSS…DGGL. Composition is skewed to polar residues over residues 56–76 and 85–94; these read SSGS…SRTY and SHNSLPSSTF. Residues 127 to 143 are compositionally biased toward low complexity; the sequence is LPGELGLSSPGPLSPSG. 2 positions are modified to phosphoserine: Ser135 and Ser140. A compositionally biased stretch (polar residues) spans 145–156; sequence KSGSQYYPSYPS. Residues 171–177 carry the Nuclear localization signal motif; the sequence is SKKVRKV. Low complexity-rich tracts occupy residues 182-193 and 242-259; these read PSSVYPSSSGDS and GDGS…SVGS. Residues 339 to 352 show a composition bias toward low complexity; the sequence is DHSSNNFSPSPSTP. At Thr351 the chain carries Phosphothreonine. Phosphoserine is present on Ser355. Arg367 carries the post-translational modification Omega-N-methylarginine. Position 375 is a phosphoserine (Ser375). The tract at residues 385–420 is leucine-zipper; that stretch reads LSKMEDRLDEAIHVLRSHAVGTASDLHGLLPGHGAL. Residues 431 to 547 form a disordered region; it reads GGRHAGLVGG…KAEREKERRV (117 aa). The segment covering 448-469 has biased composition (polar residues); it reads TSGTSLLHTHASLPSQASSLPD. Lys494 is covalently cross-linked (Glycyl lysine isopeptide (Lys-Gly) (interchain with G-Cter in SUMO2)). Ser524 carries the post-translational modification Phosphoserine. Position 529 is a phosphothreonine (Glu529). Positions 537–547 are enriched in basic and acidic residues; that stretch reads QKAEREKERRV. The region spanning 544–597 is the bHLH domain; that stretch reads ERRVANNARERLRVRDINEAFKELGRMCQLHLSSEKPQTKLLILHQAVAVILSL. Lys620 is covalently cross-linked (Glycyl lysine isopeptide (Lys-Gly) (interchain with G-Cter in SUMO2)).

In terms of assembly, homodimer. Heterodimer; efficient DNA binding requires dimerization with another bHLH protein. Forms a heterodimer with TWIST1 and TWIST2. Forms a heterodimer with NEUROD1; the heterodimer is inhibited in presence of ID2, but not NR0B2, to E-box element. Forms a heterodimer with TCF15; the heterodimer binds E-box element. Forms a heterodimer with MYOG; heterodimerization enhances MYOG DNA-binding and transcriptional activities. Forms a heterodimer with ATOH8; repress transcription of TCF3 and TCF3-NEUROG3 dimer-induced transactivation of E box-dependent promoters. Component of a nuclear TAL-1 complex composed at least of CBFA2T3, LDB1, TAL1 and TCF3. Interacts with NEUROD2. Interacts with EP300. Interacts with PTF1A, TGFB1I1 and UBE2I. Interacts with BHLHA9. Interacts with ASB2; the interaction is mediated by SKP2 and targets TCF3 for Notch-induced proteasomal degradation. Interacts with transcription factor ASCL5/AmeloD. Interacts with RALGAPA1. Interacts with FIGLA. As to quaternary structure, forms a heterodimer with ATOH7; required for ATOH7 DNA-binding. Phosphorylated following NGF stimulation. In terms of processing, undergoes Notch-induced ubiquitination and subsequent proteasomal degradation which is mediated by ASB1 or ASB2, the substrate-recognition components of probable ECS E3 ubiquitin-protein ligase complexes.

It localises to the nucleus. Transcriptional regulator. Involved in the initiation of neuronal differentiation and mesenchymal to epithelial transition. Heterodimers between TCF3 and tissue-specific basic helix-loop-helix (bHLH) proteins play major roles in determining tissue-specific cell fate during embryogenesis, like muscle or early B-cell differentiation. Together with TCF15, required for the mesenchymal to epithelial transition. Dimers bind DNA on E-box motifs: 5'-CANNTG-3'. Binds to the kappa-E2 site in the kappa immunoglobulin gene enhancer. Binds to IEB1 and IEB2, which are short DNA sequences in the insulin gene transcription control region. Functionally, facilitates ATOH7 binding to DNA at the consensus sequence 5'-CAGGTG-3', and positively regulates transcriptional activity. The sequence is that of Transcription factor E2-alpha (TCF3) from Mesocricetus auratus (Golden hamster).